The sequence spans 235 residues: MLIRNYRGLLGTKLGMTQVWDANNRVVPVTVIKAGPNVVTQVKTPDSDGYSAVQLGYGEVDPRKINKPARGHFATSGVTPRRHLVELRTADAGNYRPGQELTGEVFSAGTVVDVTGTSKGKGFAGVMKRHGFKGLGAGHGVERKHRSPGSVGGCATPGRVFKGLRMAGRMGHVRTTTSGLTIHAVDTERGYLLVRGAVPGPDGGLVLVRSAAKRPAPEAIAPAAELAGTGEEVSA.

It belongs to the universal ribosomal protein uL3 family. As to quaternary structure, part of the 50S ribosomal subunit. Forms a cluster with proteins L14 and L19.

Functionally, one of the primary rRNA binding proteins, it binds directly near the 3'-end of the 23S rRNA, where it nucleates assembly of the 50S subunit. This is Large ribosomal subunit protein uL3 from Frankia casuarinae (strain DSM 45818 / CECT 9043 / HFP020203 / CcI3).